The chain runs to 419 residues: MEKERETLQVWKKRVEQELDRVIAFWMEHSHDQEHGGFFTCLGRDGKVYDHLKYVWLQGRQVWMYCRLYRSFERFRRVELLDAARAGGEFLLRYARVAPPGKKCAFVLTRDGRPVKVQRTIFSECFYTMAMNELWKVTGEVRYQSEAIEMMDQIIHWVREDPAGLGRPQLSGALATEPMAVPMMLLSLVEQLGEEDEELTNMYAELGDWCVHRILQHVQRDGQVVLENVSEDGKELPGCLGRHQNPGHTLEAGWFLLQYALRKGDPKLRMHIIDKFLLLPFHSGWDPEHGGLFYFQDADGLCPTQLEWNMKLWWPHSEAMIAFLMGYSDSGDPALLHLFYKVAEYTFRQFRDPEYGEWFGYLNQEGKVALTIKGGPFKGCFHVPRCLAMCEQILGALLQRLEPAPLDSSPAVSTHEGSK.

Residues 185-206 form a leucine-zipper region; sequence LLSLVEQLGEEDEELTNMYAEL. Phosphoserine is present on serine 418.

Belongs to the N-acylglucosamine 2-epimerase family. As to quaternary structure, homodimer. Forms a heterodimer with renin and inhibits its activity.

The catalysed reaction is an N-acyl-D-glucosamine = an N-acyl-D-mannosamine. The protein operates within amino-sugar metabolism; N-acetylneuraminate degradation. Catalyzes the interconversion of N-acetylglucosamine to N-acetylmannosamine. Involved in the N-glycolylneuraminic acid (Neu5Gc) degradation pathway. This is N-acylglucosamine 2-epimerase (Renbp) from Mus musculus (Mouse).